A 276-amino-acid polypeptide reads, in one-letter code: 4-hydroxy-3-methylbut-2-enyl diphosphate reductase (276 aa).

Cysteine 12 lines the [4Fe-4S] cluster pocket. Histidine 36 and histidine 70 together coordinate (2E)-4-hydroxy-3-methylbut-2-enyl diphosphate. Residues histidine 36 and histidine 70 each coordinate dimethylallyl diphosphate. Residues histidine 36 and histidine 70 each contribute to the isopentenyl diphosphate site. [4Fe-4S] cluster is bound at residue cysteine 92. Position 120 (histidine 120) interacts with (2E)-4-hydroxy-3-methylbut-2-enyl diphosphate. Histidine 120 is a binding site for dimethylallyl diphosphate. Isopentenyl diphosphate is bound at residue histidine 120. Catalysis depends on glutamate 122, which acts as the Proton donor. Threonine 158 is a binding site for (2E)-4-hydroxy-3-methylbut-2-enyl diphosphate. Cysteine 186 serves as a coordination point for [4Fe-4S] cluster. (2E)-4-hydroxy-3-methylbut-2-enyl diphosphate is bound by residues serine 214, serine 215, asparagine 216, and serine 258. Residues serine 214, serine 215, asparagine 216, and serine 258 each coordinate dimethylallyl diphosphate. Isopentenyl diphosphate is bound by residues serine 214, serine 215, asparagine 216, and serine 258.

It belongs to the IspH family. It depends on [4Fe-4S] cluster as a cofactor.

The enzyme catalyses isopentenyl diphosphate + 2 oxidized [2Fe-2S]-[ferredoxin] + H2O = (2E)-4-hydroxy-3-methylbut-2-enyl diphosphate + 2 reduced [2Fe-2S]-[ferredoxin] + 2 H(+). The catalysed reaction is dimethylallyl diphosphate + 2 oxidized [2Fe-2S]-[ferredoxin] + H2O = (2E)-4-hydroxy-3-methylbut-2-enyl diphosphate + 2 reduced [2Fe-2S]-[ferredoxin] + 2 H(+). It functions in the pathway isoprenoid biosynthesis; dimethylallyl diphosphate biosynthesis; dimethylallyl diphosphate from (2E)-4-hydroxy-3-methylbutenyl diphosphate: step 1/1. Its pathway is isoprenoid biosynthesis; isopentenyl diphosphate biosynthesis via DXP pathway; isopentenyl diphosphate from 1-deoxy-D-xylulose 5-phosphate: step 6/6. Catalyzes the conversion of 1-hydroxy-2-methyl-2-(E)-butenyl 4-diphosphate (HMBPP) into a mixture of isopentenyl diphosphate (IPP) and dimethylallyl diphosphate (DMAPP). Acts in the terminal step of the DOXP/MEP pathway for isoprenoid precursor biosynthesis. This Wolinella succinogenes (strain ATCC 29543 / DSM 1740 / CCUG 13145 / JCM 31913 / LMG 7466 / NCTC 11488 / FDC 602W) (Vibrio succinogenes) protein is 4-hydroxy-3-methylbut-2-enyl diphosphate reductase.